The following is a 207-amino-acid chain: uncharacterized protein (207 aa).

2 residues coordinate S-adenosyl-L-methionine: glycine 51 and aspartate 72.

This sequence belongs to the methyltransferase superfamily. YrrT family.

Functionally, could be a S-adenosyl-L-methionine-dependent methyltransferase. This is an uncharacterized protein from Staphylococcus carnosus (strain TM300).